The sequence spans 1313 residues: Kinesin-like protein KIN-12B (1313 aa).

The interval 1–74 (MKHFMMPRNA…PPRPPSSNPL (74 aa)) is disordered. Positions 17 to 26 (ESQSPNPSLT) are enriched in polar residues. A Kinesin motor domain is found at 96-431 (GVKVIVRMKP…LRFAQRAKAI (336 aa)). 170 to 177 (GQTGSGKT) provides a ligand contact to ATP. 3 microtubules-binding regions span residues 298 to 302 (SSRSH), 331 to 337 (VDLAGSE), and 380 to 384 (HIPYR). A neck region spans residues 429–467 (KAIQNKAIVNEVMQDDVNFLREVIRQLRDELQRVKDDKG). Residues 685-709 (ESASPKIRNSRKSLRTTSMSTASQK) are disordered. The segment covering 699–708 (RTTSMSTASQ) has biased composition (polar residues). 3 coiled-coil regions span residues 932-1003 (LDEE…YTDS), 1062-1130 (AEEL…RIRE), and 1167-1241 (EKEV…TEIS).

Belongs to the TRAFAC class myosin-kinesin ATPase superfamily. Kinesin family. KIN-12 subfamily. Homodimer and heterodimer with KIN12A. Interacts with TIO.

The protein localises to the cytoplasm. The protein resides in the cytoskeleton. It is found in the phragmoplast. Plus-end directed kinesin-like motor enzyme that plays a critical role in the organization of phragmoplast microtubules during cytokinesis. Constitutes a signaling module in association with serine/threonine-protein kinase TIO that is required to support phragmoplast expansion and cell-plate growth in plant cells. This is Kinesin-like protein KIN-12B from Arabidopsis thaliana (Mouse-ear cress).